Reading from the N-terminus, the 378-residue chain is MQVEVDLVIKMIGMIVIGALIGAVTNHLAIRMLFRPLEAKYIGKYRIPFTPGLIPKRRDELAANLGRTVVKHLLTPEGISKRLQQPIVYQAITRMIQQEVQKWTRSTKTIREIAERFVANPEGKLQQQIEQRIDQELESMAVAIKTARLTEVLGEGGTTKIKTAIPGMVEVLLHQTEQYFDSPAGKMKLEETVAQFIQSKLGGGMFGMLLANVNIVEMIQPELKRVIQGKSTHQFISEMVEQEVHTLLERTVGSLLEPEAERQIIERMKSEIVTRIPLAALLDTPLHEFLEPLEVRISQEMVPMLSKQMVNRLIEQVEQIMATLDLETIVREEVDLLDTAYLEEIVLSISRREFRAITWLGGLLGGLIGMIQAILLIV.

A run of 2 helical transmembrane segments spans residues 5–25 (VDLV…GAVT) and 357–377 (ITWL…ILLI).

Belongs to the UPF0754 family.

It is found in the cell membrane. In Exiguobacterium sibiricum (strain DSM 17290 / CCUG 55495 / CIP 109462 / JCM 13490 / 255-15), this protein is UPF0754 membrane protein Exig_0680.